A 450-amino-acid chain; its full sequence is Serine incorporator 2 (450 aa).

The next 11 membrane-spanning stretches (helical) occupy residues 5 to 27, 40 to 57, 96 to 118, 131 to 150, 160 to 182, 203 to 225, 238 to 257, 264 to 286, 315 to 337, 380 to 402, and 417 to 439; these read LGACSLLSCASCLCGSAPCILCG, LLFTSFLFLGVLVSIIML, AVYRMCFATAAFFFFFMLLMICV, GFWFFKFLILVGITVGAFYI, FYFGVVGSFLFILIQLILFVDFA, AGLFFFTFLFYLLSIAAVALMFV, VFISLNLTFCVCVSIIAVLP, PNSGLLQASVITLYTMFVTWSAL, VWWDAPSIVGLVIFILCTFFISL, TYSYSFFHFCLVLASLHVMMTLT, and WTSVWVKICASWAGLFLYLWTLV.

This sequence belongs to the TDE1 family.

It is found in the cell membrane. It carries out the reaction a 1,2-diacyl-sn-glycero-3-phospho-L-serine(in) = a 1,2-diacyl-sn-glycero-3-phospho-L-serine(out). The catalysed reaction is a 1,2-diacyl-sn-glycero-3-phosphocholine(in) = a 1,2-diacyl-sn-glycero-3-phosphocholine(out). The enzyme catalyses a 1,2-diacyl-sn-glycero-3-phosphoethanolamine(in) = a 1,2-diacyl-sn-glycero-3-phosphoethanolamine(out). Its function is as follows. Non-ATP-dependent, non-specific lipid transporter for phosphatidylserine, phosphatidylcholine, and phosphatidylethanolamine. Functions as a scramblase that flips lipids in both directions across the membrane. In contrast to SERINC3 and SERINC5, has no effect on gammaretrovirus particles infectivity. This is Serine incorporator 2 (Serinc2) from Mus musculus (Mouse).